The chain runs to 232 residues: UPF0502 protein mma_2112 (232 aa).

The protein belongs to the UPF0502 family.

This chain is UPF0502 protein mma_2112, found in Janthinobacterium sp. (strain Marseille) (Minibacterium massiliensis).